Reading from the N-terminus, the 250-residue chain is FAS1 domain-containing protein AER383W (250 aa).

Positions 1–18 are cleaved as a signal peptide; the sequence is MRLKTILLGFCAFHVARS. Residues 87-247 form the FAS1 domain; it reads GVTLDDRLQS…GIVLVIDSSL (161 aa).

It localises to the vacuole. This chain is FAS1 domain-containing protein AER383W, found in Eremothecium gossypii (strain ATCC 10895 / CBS 109.51 / FGSC 9923 / NRRL Y-1056) (Yeast).